The chain runs to 843 residues: KN motif and ankyrin repeat domain-containing protein 2 (843 aa).

The interval 1–31 (MAQVLHVPAPFPGTPGQASPAAFPSKEPDPP) is disordered. The interval 1–72 (MAQVLHVPAP…AVQRRPRLGS (72 aa)) is interaction with AIFM1. A phosphoserine mark is found at Ser19, Ser83, Ser86, Ser89, and Ser92. Arg105 bears the Omega-N-methylarginine mark. The disordered stretch occupies residues 161-182 (LAGVGLLPPTPRSSGLSTPVAP). The residue at position 170 (Thr170) is a Phosphothreonine. Coiled coils occupy residues 183–234 (SAGH…QLKS) and 282–313 (DGEA…TQQV). Residue Thr331 is modified to Phosphothreonine. A Phosphoserine modification is found at Ser358. Positions 410–577 (TERSCTGAPR…VASGPDPEEE (168 aa)) are disordered. A compositionally biased stretch (low complexity) spans 457–470 (AAASQDSQAADGAG). Ser532 carries the post-translational modification Phosphoserine. The span at 547-561 (ATTSLEGPQLSQESQ) shows a compositional bias: polar residues. The stretch at 606 to 643 (RELKVAYTTVLQEWLRLACRSDAHPELVRRHLVTFRAM) is one ANK 0; degenerate repeat. The segment at 661-827 (TALHYSVSHA…YSRMNIKCSF (167 aa)) is interaction with NCOA1. ANK repeat units lie at residues 673 to 703 (PVVR…TALA), 707 to 740 (TQDD…LAVS), 745 to 774 (DVVR…ACEH), 778 to 808 (EITG…ALDA), and 812 to 842 (EIAS…SSAE).

Interacts (non-phosphorylated form) with NCOA1; NCOA2 AND NCOA3. Interacts with AIFM1. Interacts with ARHGDIA; the interaction is direct and may regulate the interaction of ARHGDIA with RHOA, RAC1 and CDC42. Interacts (via ANK repeats 1-5) with KIF21A (via residues 1148-1169). Phosphorylated by casein kinase II upon estrogen stimulation. Phosphorylation induces the release by KANK2 of NCOA1 and its translocation to the nucleus where NCOA1 can activate gene transcription. As to expression, widely expressed with highest levels in liver and skeletal muscle.

Its subcellular location is the cytoplasm. The protein localises to the mitochondrion. Functionally, involved in transcription regulation by sequestering in the cytoplasm nuclear receptor coactivators such as NCOA1, NCOA2 and NCOA3. Involved in regulation of caspase-independent apoptosis by sequestering the proapoptotic factor AIFM1 in mitochondria. Pro-apoptotic stimuli can induce its proteasomal degradation allowing the translocation of AIFM1 to the nucleus to induce apoptosis. Involved in the negative control of vitamin D receptor signaling pathway. Involved in actin stress fibers formation through its interaction with ARHGDIA and the regulation of the Rho signaling pathway. May thereby play a role in cell adhesion and migration, regulating for instance podocytes migration during development of the kidney. Through the Rho signaling pathway may also regulate cell proliferation. The protein is KN motif and ankyrin repeat domain-containing protein 2 (Kank2) of Mus musculus (Mouse).